We begin with the raw amino-acid sequence, 308 residues long: S-crystallin SL18 (308 aa).

Residues 2–80 enclose the GST N-terminal domain; the sequence is PKYTLYYFNS…YLARQFGFYG (79 aa). The interval 165–205 is disordered; that stretch reads EMRSQDSMVEPPSQKLSPELESQSSLCSERPQCGPPDPMMG. Residues 178–191 are compositionally biased toward polar residues; sequence QKLSPELESQSSLC. Positions 185-308 constitute a GST C-terminal domain; sequence ESQSSLCSER…YFTLRNYTDF (124 aa).

The protein belongs to the GST superfamily. In terms of tissue distribution, lens.

Its function is as follows. S-crystallins are structural components of squids and octopi eye lens. Contains relatively little if any GST activity. This Nototodarus sloanii (Wellington flying squid) protein is S-crystallin SL18.